The sequence spans 149 residues: MADQLTEEQIAEFKEAFSLFDKDGDGTITTKELGTVMRSLGQNPTEAELQDMINEVDADGNGTIDFPEFLTMMARKMKDTDSEEEIREAFRVFDKDGNGYISAAELRHVMTNLGEKLTDEEVDEMIREADIDGDGQVNYEEFVQIMTAK.

Position 2 is an N-acetylalanine (alanine 2). EF-hand domains follow at residues 8–43, 44–79, 81–116, and 117–149; these read EQIA…LGQN, PTEA…KMKD, DSEE…LGEK, and LTDE…MTAK. Aspartate 21, aspartate 23, aspartate 25, threonine 27, glutamate 32, aspartate 57, aspartate 59, asparagine 61, threonine 63, glutamate 68, aspartate 94, aspartate 96, asparagine 98, tyrosine 100, and glutamate 105 together coordinate Ca(2+). Lysine 116 bears the N6,N6,N6-trimethyllysine mark. Residues aspartate 130, aspartate 132, aspartate 134, glutamine 136, and glutamate 141 each coordinate Ca(2+).

It belongs to the calmodulin family.

Functionally, calmodulin acts as part of a calcium signal transduction pathway by mediating the control of a large number of enzymes, ion channels, aquaporins and other proteins through calcium-binding. Calcium-binding is required for the activation of calmodulin. Among the enzymes to be stimulated by the calmodulin-calcium complex are a number of protein kinases, such as myosin light-chain kinases and calmodulin-dependent protein kinase type II (CaMK2), and phosphatases. The chain is Calmodulin (calm) from Epinephelus akaara (Hong Kong grouper).